Consider the following 30-residue polypeptide: Superoxide dismutase [Cu-Zn] 1 (30 aa).

The protein belongs to the Cu-Zn superoxide dismutase family. It depends on Cu cation as a cofactor. Requires Zn(2+) as cofactor. As to expression, expressed in fruits, leaves and pollen grains.

The protein resides in the cytoplasm. The protein localises to the endoplasmic reticulum. The catalysed reaction is 2 superoxide + 2 H(+) = H2O2 + O2. Inhibited by KCN and H(2)O(2). Its function is as follows. Destroys radicals which are normally produced within the cells and which are toxic to biological systems. Probably involved in the protection against oxidative stress during pollen development. The polypeptide is Superoxide dismutase [Cu-Zn] 1 (Olea europaea (Common olive)).